The primary structure comprises 429 residues: 3-phosphoshikimate 1-carboxyvinyltransferase (429 aa).

3-phosphoshikimate-binding residues include lysine 11, serine 12, and arginine 16. Lysine 11 contacts phosphoenolpyruvate. Phosphoenolpyruvate is bound by residues glycine 82 and arginine 110. Serine 155, glutamine 157, aspartate 302, and lysine 329 together coordinate 3-phosphoshikimate. Position 157 (glutamine 157) interacts with phosphoenolpyruvate. The Proton acceptor role is filled by aspartate 302. Phosphoenolpyruvate contacts are provided by arginine 333 and arginine 385.

This sequence belongs to the EPSP synthase family. In terms of assembly, monomer.

It is found in the cytoplasm. It carries out the reaction 3-phosphoshikimate + phosphoenolpyruvate = 5-O-(1-carboxyvinyl)-3-phosphoshikimate + phosphate. Its pathway is metabolic intermediate biosynthesis; chorismate biosynthesis; chorismate from D-erythrose 4-phosphate and phosphoenolpyruvate: step 6/7. In terms of biological role, catalyzes the transfer of the enolpyruvyl moiety of phosphoenolpyruvate (PEP) to the 5-hydroxyl of shikimate-3-phosphate (S3P) to produce enolpyruvyl shikimate-3-phosphate and inorganic phosphate. The chain is 3-phosphoshikimate 1-carboxyvinyltransferase from Helicobacter acinonychis (strain Sheeba).